We begin with the raw amino-acid sequence, 188 residues long: Adrenodoxin, mitochondrial (188 aa).

The N-terminal 64 residues, 1–64 (MAAAPGARLL…RPLSVSARAR (64 aa)), are a transit peptide targeting the mitochondrion. Position 67 is a phosphoserine (S67). Positions 69–175 (DKVTVHFKNR…NMTVRVPEAV (107 aa)) constitute a 2Fe-2S ferredoxin-type domain. The residue at position 70 (K70) is an N6-acetyllysine; alternate. K70 carries the post-translational modification N6-succinyllysine; alternate. [2Fe-2S] cluster-binding residues include C110, C116, C119, and C156. K162 carries the N6-succinyllysine modification. Residue S181 is modified to Phosphoserine.

The protein belongs to the adrenodoxin/putidaredoxin family. As to quaternary structure, interacts with CYP11A1. [2Fe-2S] cluster serves as cofactor. As to expression, found in all tissues, most abundant in adrenals, ovaries and testes.

The protein localises to the mitochondrion matrix. Functionally, essential for the synthesis of various steroid hormones. Participates in the reduction of mitochondrial cytochrome P450 for steroidogenesis. Transfers electrons from adrenodoxin reductase to CYP11A1, a cytochrome P450 that catalyzes cholesterol side-chain cleavage. Does not form a ternary complex with adrenodoxin reductase and CYP11A1 but shuttles between the two enzymes to transfer electrons. The protein is Adrenodoxin, mitochondrial (Fdx1) of Rattus norvegicus (Rat).